A 529-amino-acid polypeptide reads, in one-letter code: Delayed-rectifier potassium channel regulatory subunit KCNS1 (529 aa).

Topologically, residues 1–217 are cytoplasmic; sequence MLMLLVRGTR…LTMENPGYSL (217 aa). The chain crosses the membrane as a helical span at residues 218-239; sequence PSKLFSCVSISVVLASIAAMCI. Residues 240–270 are Extracellular-facing; that stretch reads HSLPEYQAREAAAAVAAVAAGRSAEGVRDDP. A helical membrane pass occupies residues 271-293; sequence VLRRLEYFCIAWFSFEVSSRLLL. Topologically, residues 294–304 are cytoplasmic; it reads APSTRNFFCHP. The helical transmembrane segment at 305 to 322 threads the bilayer; the sequence is LNLIDIVSVLPFYLTLLA. The Extracellular segment spans residues 323–340; sequence GAALGDHGGTGGKEFGHL. A helical; Voltage-sensor membrane pass occupies residues 341-361; the sequence is GKVVQVFRLMRIFRVLKLARH. Topologically, residues 362 to 376 are cytoplasmic; sequence STGLRSLGATLKHSY. Residues 377–398 traverse the membrane as a helical segment; sequence REVGILLLYLAVGVSVFSGVAY. Topologically, residues 399–411 are extracellular; sequence TAEKEEHVGFDTI. The helical intramembrane region spans 412 to 423; the sequence is PACWWWGTVSMT. The short motif at 424–429 is the Selectivity filter element; the sequence is TVGYGD. Residues 424 to 431 lie within the membrane without spanning it; that stretch reads TVGYGDVV. The Extracellular segment spans residues 432–438; the sequence is PVTVAGK. A helical transmembrane segment spans residues 439 to 467; the sequence is LAASGCILGGILVVALPITIIFNKFSHFY. The Cytoplasmic segment spans residues 468–529; that stretch reads RRQKALEAAV…PSEPPHSQMY (62 aa). Positions 494 to 529 are disordered; that stretch reads GVSEASLETSRETSQEGRSADLETQVPSEPPHSQMY. The segment covering 502 to 514 has biased composition (basic and acidic residues); the sequence is TSRETSQEGRSAD.

It belongs to the potassium channel family. S (TC 1.A.1.2) subfamily. Kv9.1/KCNS1 sub-subfamily. Heterotetramer with KCNB1. Heterotetramer with KCNB2. Does not form homomultimers.

The protein localises to the cell membrane. Its function is as follows. Potassium channel regulatory subunit that modulate the delayed rectifier voltage-gated potassium channel activity of KCNB1 and KCNB2 by altering their kinetics, expression levels, and shifting the half-inactivation potential to more polarized values. While it does not form functional channels on its own, it can form functional heterotetrameric channels with KCNB1 and KCNB2. Each regulatory subunit has unique regulatory properties that can lead to extensive inhibition, significant changes in kinetics, and/or substantial shifts in the voltage dependencies of the inactivation process. This Aotus nancymaae (Ma's night monkey) protein is Delayed-rectifier potassium channel regulatory subunit KCNS1.